The following is a 435-amino-acid chain: Angio-associated migratory cell protein (435 aa).

The segment at 1–65 is disordered; it reads MESESESGAA…EEEEEGNEEG (65 aa). A Phosphoserine modification is found at Ser-20. Acidic residues predominate over residues 39 to 63; the sequence is DPDDLAQEMEDVDFEEEEEEEEGNE. 8 WD repeats span residues 90-130, 133-172, 174-213, 215-255, 259-300, 316-355, 357-396, and 399-434; these read LHSA…LLFE, GHKDSVTCAGFSHDSTLVATGDMSGLLKVWQVDTKEEVWS, EAGDLEWMEWHPRAPVLLAGTADGNTWMWKVPNGDCKTFQ, PNCP…HVLK, GHQG…GVFR, SESNSVESLGFCSVMPLAAVGYLDGTLAIYDLSTQTLRHQ, QHQSGIVQLLWEAGTAVVYTCSLDGIVRLWDARTGRLLTD, and GHTAEILDFALSKDASLVVTTSGDHKAKVFCVQRPD.

Its subcellular location is the cell membrane. It is found in the cytoplasm. Plays a role in angiogenesis and cell migration. In smooth muscle cell migration, may act through the RhoA pathway. The polypeptide is Angio-associated migratory cell protein (AAMP) (Canis lupus familiaris (Dog)).